The primary structure comprises 48 residues: Small, acid-soluble spore protein P (48 aa).

Over residues 1–12 (MTNKNTSKDMHK) the composition is skewed to basic and acidic residues. Positions 1 to 48 (MTNKNTSKDMHKNAPKGHNPGQPEPLSGSKKVKNRNHTRQKHNTSHDM) are disordered. The segment covering 30–48 (KKVKNRNHTRQKHNTSHDM) has biased composition (basic residues).

It belongs to the SspP family.

Its subcellular location is the spore core. This Bacillus velezensis (strain DSM 23117 / BGSC 10A6 / LMG 26770 / FZB42) (Bacillus amyloliquefaciens subsp. plantarum) protein is Small, acid-soluble spore protein P.